The sequence spans 488 residues: Dipeptidase 3 (488 aa).

The signal sequence occupies residues 1-35 (MQPTGPEGPRALSLRPLGHRLSLLGVLLIIPSLWV). Over residues 41–60 (TPSLSSAPTSPGASSAMTTP) the composition is skewed to low complexity. Residues 41–74 (TPSLSSAPTSPGASSAMTTPGIPNDTTTSGVTSD) form a disordered region. 2 cysteine pairs are disulfide-bonded: C143–C222 and C294–C326. An N-linked (GlcNAc...) asparagine glycan is attached at N331. The GPI-anchor amidated serine moiety is linked to residue S459. Positions 460–487 (KAPPCPLLGLVAAVTSPAFTLWLCCSGH) are cleaved as a propeptide — removed in mature form.

Belongs to the metallo-dependent hydrolases superfamily. Peptidase M19 family. As to quaternary structure, homodimer; disulfide-linked. Interacts with TEX101; co-localized on the cell surface of spermatocytes, spermatids, and testicular spermatozoa, co-localized only in cytoplasmic droplets of caput and corpus epididymal sperm.

It is found in the membrane. Its function is as follows. Lacks dipeptidase activity and is unable to hydrolyze cystinyl-bis-glycine, leukotriene D4 and the beta-lactam antibiotic imipenem. The absence of activity may be due to the inability of serine (instead of aspartate found in DPEP1/2) at position 356 to function as the acid/base catalyst and activate the nucleophilic water/hydroxide. The sequence is that of Dipeptidase 3 (Dpep3) from Rattus norvegicus (Rat).